A 247-amino-acid chain; its full sequence is Terpene cyclase ausL (247 aa).

Helical transmembrane passes span 49-69, 75-95, 114-134, 138-158, 171-191, and 206-226; these read AIAVLPLCCDIAWEFTYAWIY, HWQGVVRVWFFLHTAVLAATL, LVLLYVAVIGAFAAGQLCLAL, GALGFHWGGALCQFLSSSGAV, SLVIWGARAISTAGGFVKLCI, and PMCWFYIGIVLSLDASYPVLY.

It belongs to the paxB family.

The protein localises to the membrane. It functions in the pathway secondary metabolite biosynthesis; terpenoid biosynthesis. Its function is as follows. Terpene cyclase; part of the gene cluster that mediates the biosynthesis of calidodehydroaustin, a fungal meroterpenoid. The first step of the pathway is the synthesis of 3,5-dimethylorsellinic acid by the polyketide synthase ausA. 3,5-dimethylorsellinic acid is then prenylated by the polyprenyl transferase ausN. Further epoxidation by the FAD-dependent monooxygenase ausM and cyclization by the probable terpene cyclase ausL lead to the formation of protoaustinoid A. Protoaustinoid A is then oxidized to spiro-lactone preaustinoid A3 by the combined action of the FAD-binding monooxygenases ausB and ausC, and the dioxygenase ausE. Acid-catalyzed keto-rearrangement and ring contraction of the tetraketide portion of preaustinoid A3 by ausJ lead to the formation of preaustinoid A4. The aldo-keto reductase ausK, with the help of ausH, is involved in the next step by transforming preaustinoid A4 into isoaustinone which is in turn hydroxylated by the P450 monooxygenase ausI to form austinolide. The cytochrome P450 monooxygenase ausG modifies austinolide to austinol. Austinol is further acetylated to austin by the O-acetyltransferase ausP, which spontaneously changes to dehydroaustin. The cytochrome P450 monooxygenase ausR then converts dehydroaustin is into 7-dehydrodehydroaustin. The hydroxylation catalyzed by ausR permits the O-acetyltransferase ausQ to add an additional acetyl group to the molecule, leading to the formation of acetoxydehydroaustin. The short chain dehydrogenase ausT catalyzes the reduction of the double bond present between carbon atoms 1 and 2 to convert 7-dehydrodehydroaustin into 1,2-dihydro-7-hydroxydehydroaustin. AusQ catalyzes not only an acetylation reaction but also the addition of the PKS ausV diketide product to 1,2-dihydro-7-hydroxydehydroaustin, forming precalidodehydroaustin. Finally, the iron/alpha-ketoglutarate-dependent dioxygenase converts precalidodehydroaustin into calidodehydroaustin. The chain is Terpene cyclase ausL from Aspergillus calidoustus.